The sequence spans 114 residues: DNA-directed RNA polymerases II, IV and V subunit 9A (114 aa).

Residues cysteine 7, cysteine 10, cysteine 29, cysteine 32, cysteine 76, cysteine 79, cysteine 103, and cysteine 108 each contribute to the Zn(2+) site. A TFIIS-type zinc finger spans residues 72 to 113 (KAVRCSKCQHREAVFFQATARGEEGMTLFFVCCNPNCGHRWR).

It belongs to the archaeal RpoM/eukaryotic RPA12/RPB9/RPC11 RNA polymerase family. Component of the RNA polymerase II, IV and V complexes. Interacts with NRPD1.

It localises to the nucleus. The protein resides in the nucleolus. Functionally, DNA-dependent RNA polymerase catalyzes the transcription of DNA into RNA using the four ribonucleoside triphosphates as substrates. Component of RNA polymerase II which synthesizes mRNA precursors and many functional non-coding RNAs. Pol II is the central component of the basal RNA polymerase II transcription machinery. It is composed of mobile elements that move relative to each other. Component of RNA polymerases IV and V which mediate short-interfering RNAs (siRNA) accumulation and subsequent RNA-directed DNA methylation-dependent (RdDM) transcriptional gene silencing (TGS) of endogenous repeated sequences, including transposable elements. Required for RNA silencing. The polypeptide is DNA-directed RNA polymerases II, IV and V subunit 9A (NRPB9A) (Arabidopsis thaliana (Mouse-ear cress)).